Consider the following 339-residue polypeptide: DNA-directed RNA polymerase subunit alpha (339 aa).

Residues 1 to 235 (MVIQKNWQEL…DQLQVFVNFE (235 aa)) are alpha N-terminal domain (alpha-NTD). The alpha C-terminal domain (alpha-CTD) stretch occupies residues 251–339 (FNPALLKKVD…DLAKRFEEHY (89 aa)).

This sequence belongs to the RNA polymerase alpha chain family. In terms of assembly, homodimer. The RNAP catalytic core consists of 2 alpha, 1 beta, 1 beta' and 1 omega subunit. When a sigma factor is associated with the core the holoenzyme is formed, which can initiate transcription.

The catalysed reaction is RNA(n) + a ribonucleoside 5'-triphosphate = RNA(n+1) + diphosphate. Functionally, DNA-dependent RNA polymerase catalyzes the transcription of DNA into RNA using the four ribonucleoside triphosphates as substrates. This Methylobacterium radiotolerans (strain ATCC 27329 / DSM 1819 / JCM 2831 / NBRC 15690 / NCIMB 10815 / 0-1) protein is DNA-directed RNA polymerase subunit alpha.